We begin with the raw amino-acid sequence, 1499 residues long: Rap guanine nucleotide exchange factor 2 (1499 aa).

Disordered regions lie at residues 40-59 and 68-101; these read HVSS…SSSL and SEAG…SDPL. The segment covering 83–94 has biased composition (acidic residues); sequence VDSEDDDDEEDI. 135 to 254 is a binding site for a nucleoside 3',5'-cyclic phosphate; that stretch reads AFANMTMSVR…VEEEGEIVMV (120 aa). In terms of domain architecture, N-terminal Ras-GEF spans 267–380; it reads KGHIVIKGTS…RLLNIACAAK (114 aa). A PDZ domain is found at 385–470; it reads LMTLTKPSRE…ITVKTNLFVF (86 aa). Position 501 is a phosphoserine (S501). The 87-residue stretch at 606–692 folds into the Ras-associating domain; sequence PDQVLRVFKA…GRYYLKNNME (87 aa). The residue at position 644 (T644) is a Phosphothreonine; by PLK2. Positions 717–944 constitute a Ras-GEF domain; the sequence is STVEVATQLS…SQGSTNATVL (228 aa). A Phosphoserine; by PLK2 modification is found at S806. Phosphoserine is present on S930. Position 933 is a phosphoserine; by PLK2 (S933). Positions 1002-1050 are disordered; it reads PATNTLPKNPGDKKPVKSETSPVAPRAGSQQKAQSLPQPQQQPPPAHKI. Phosphoserine is present on S1022. A compositionally biased stretch (low complexity) spans 1031-1040; it reads QQKAQSLPQP. Phosphoserine occurs at positions 1080, 1089, 1095, 1116, 1120, and 1159. Residues 1095–1160 form a disordered region; that stretch reads SLERHKKQAE…RSSIVSNSSF (66 aa). Composition is skewed to low complexity over residues 1111–1125 and 1141–1160; these read SSQL…QSSP and SDSG…NSSF. Residue S1176 is modified to Phosphoserine; by PLK2. Disordered regions lie at residues 1224–1256 and 1305–1499; these read PSTE…SSGS and TKYN…VSAV. 2 stretches are compositionally biased toward polar residues: residues 1247–1256 and 1307–1331; these read GSWTSCSSGS and YNRQ…SSTG. Low complexity predominate over residues 1355 to 1366; that stretch reads EAESSSLTSVTT. A compositionally biased stretch (polar residues) spans 1441 to 1462; the sequence is SSDTAGPSSVQQPHGHPTSSRP. Over residues 1488–1499 the composition is skewed to acidic residues; it reads TEEDEDEQVSAV.

The protein belongs to the RAPGEF2 family. As to quaternary structure, interacts with CDH1, CTNNB1 and TJP1. Interacts (via C-terminal domain) with MAGI2 (via PDZ and WW domains); the interaction occurs before or after NGF stimulation. Interacts with KIDINS220 and NTRK1; the interactions occur after NGF stimulation. Found in a complex, at least composed of KIDINS220, MAGI2, NTRK1 and RAPGEF2; the complex is mainly formed at late endosomes in a neuronal growth factor (NGF)-dependent manner. Interacts (via C-terminal domain) with NEDD4 (via WW domains); this interaction leads to ubiquitination and degradation via the proteasome pathway in a cAMP-independent manner. Interacts with MAGI1 isoform 3 (via PDZ domain). Interacts with ADRB1 (via C-terminal PDZ motif); the interaction is direct. Interacts (via Ras-associating domain) with RAP1A (via GTP-bound active form). Interacts weakly with HRAS (via GDP- and GTP-bound forms). Interacts (via C-terminal domain) with MAGI2 (via PDZ and WW domains). In terms of processing, ubiquitinated by NEDD4, leading to proteasomal degradation. Phosphorylation by PLK2 promotes its activity. Expressed in primary neuronal and endocrine cells (at protein level). Highest expression levels in brain. Lower expression levels in heart, kidney, lung, placenta and blood leukocytes.

It localises to the cytoplasm. It is found in the perinuclear region. The protein resides in the cell membrane. Its subcellular location is the late endosome. The protein localises to the cell junction. Its function is as follows. Functions as a guanine nucleotide exchange factor (GEF), which activates Rap and Ras family of small GTPases by exchanging bound GDP for free GTP in a cAMP-dependent manner. Serves as a link between cell surface receptors and Rap/Ras GTPases in intracellular signaling cascades. Also acts as an effector for Rap1 by direct association with Rap1-GTP thereby leading to the amplification of Rap1-mediated signaling. Shows weak activity on HRAS. It is controversial whether RAPGEF2 binds cAMP and cGMP or not. Its binding to ligand-activated beta-1 adrenergic receptor ADRB1 leads to the Ras activation through the G(s)-alpha signaling pathway. Involved in the cAMP-induced Ras and Erk1/2 signaling pathway that leads to sustained inhibition of long term melanogenesis by reducing dendrite extension and melanin synthesis. Also provides inhibitory signals for cell proliferation of melanoma cells and promotes their apoptosis in a cAMP-independent nanner. Regulates cAMP-induced neuritogenesis by mediating the Rap1/B-Raf/ERK signaling through a pathway that is independent on both PKA and RAPGEF3/RAPGEF4. Involved in neuron migration and in the formation of the major forebrain fiber connections forming the corpus callosum, the anterior commissure and the hippocampal commissure during brain development. Involved in neuronal growth factor (NGF)-induced sustained activation of Rap1 at late endosomes and in brain-derived neurotrophic factor (BDNF)-induced axon outgrowth of hippocampal neurons. Plays a role in the regulation of embryonic blood vessel formation and in the establishment of basal junction integrity and endothelial barrier function. May be involved in the regulation of the vascular endothelial growth factor receptor KDR and cadherin CDH5 expression at allantois endothelial cell-cell junctions. The chain is Rap guanine nucleotide exchange factor 2 (RAPGEF2) from Homo sapiens (Human).